Reading from the N-terminus, the 93-residue chain is uncharacterized protein (93 aa).

This sequence to B.subtilis YdcN C-terminal region.

This is an uncharacterized protein from Methanocaldococcus jannaschii (strain ATCC 43067 / DSM 2661 / JAL-1 / JCM 10045 / NBRC 100440) (Methanococcus jannaschii).